A 178-amino-acid chain; its full sequence is UPF0228 protein MA_4223 (178 aa).

Belongs to the UPF0228 family.

This is UPF0228 protein MA_4223 from Methanosarcina acetivorans (strain ATCC 35395 / DSM 2834 / JCM 12185 / C2A).